We begin with the raw amino-acid sequence, 177 residues long: RNA pyrophosphohydrolase (177 aa).

The region spanning 6-149 (GYRPNVGIVI…KRDVYRRVMK (144 aa)) is the Nudix hydrolase domain. Residues 38–59 (GGINPGESAEQAMYRELFEEVG) carry the Nudix box motif.

This sequence belongs to the Nudix hydrolase family. RppH subfamily. The cofactor is a divalent metal cation.

Its function is as follows. Accelerates the degradation of transcripts by removing pyrophosphate from the 5'-end of triphosphorylated RNA, leading to a more labile monophosphorylated state that can stimulate subsequent ribonuclease cleavage. The sequence is that of RNA pyrophosphohydrolase from Pectobacterium carotovorum subsp. carotovorum (strain PC1).